Reading from the N-terminus, the 792-residue chain is Putative cellulose synthase-like protein H3 (792 aa).

2 helical membrane-spanning segments follow: residues 25–45 (AWMLANFVVLFLLLALLVRRA) and 55–75 (VGGAAWRVAFACEAWFAFVWL). The disordered stretch occupies residues 132 to 154 (GRHVRDDGGPGARAAGGDGEQGA). The span at 140–151 (GPGARAAGGDGE) shows a compositional bias: gly residues. Residues Asp181 and Asp501 contribute to the active site. 6 consecutive transmembrane segments (helical) span residues 579–599 (VWAVRGFVELCYELLVPYCLL), 613–632 (FNITLALFLTYNTYNFVEYM), 650–670 (IISASAWLLAFFTVLLKTIGL), 706–726 (VFIPVTALTMLNIVAITIGTW), 739–759 (GPGISEFMSCGWLLLCLLPFV), and 768–788 (YGIPWSVKLKASLLVALFLFC).

Belongs to the glycosyltransferase 2 family. Plant cellulose synthase-like H subfamily.

Its subcellular location is the golgi apparatus membrane. Its function is as follows. Thought to be a Golgi-localized beta-glycan synthase that polymerize the backbones of noncellulosic polysaccharides (hemicelluloses) of plant cell wall. The polypeptide is Putative cellulose synthase-like protein H3 (CSLH3) (Oryza sativa subsp. japonica (Rice)).